Reading from the N-terminus, the 223-residue chain is Translation initiation factor 6 (223 aa).

It belongs to the eIF-6 family.

Binds to the 50S ribosomal subunit and prevents its association with the 30S ribosomal subunit to form the 70S initiation complex. The sequence is that of Translation initiation factor 6 from Methanobrevibacter smithii (strain ATCC 35061 / DSM 861 / OCM 144 / PS).